The chain runs to 423 residues: Mannose-6-phosphate isomerase (423 aa).

Ala2 carries the post-translational modification N-acetylalanine. Phosphoserine occurs at positions 102 and 108. The Zn(2+) site is built by Gln110, His112, Glu137, and His276. Arg295 is an active-site residue.

It belongs to the mannose-6-phosphate isomerase type 1 family. It depends on Zn(2+) as a cofactor. Expressed in all tissues, but more abundant in heart, brain and skeletal muscle.

It localises to the cytoplasm. The catalysed reaction is D-mannose 6-phosphate = D-fructose 6-phosphate. It participates in nucleotide-sugar biosynthesis; GDP-alpha-D-mannose biosynthesis; alpha-D-mannose 1-phosphate from D-fructose 6-phosphate: step 1/2. Functionally, isomerase that catalyzes the interconversion of fructose-6-P and mannose-6-P and has a critical role in the supply of D-mannose derivatives required for many eukaryotic glycosylation reactions. This is Mannose-6-phosphate isomerase from Homo sapiens (Human).